A 94-amino-acid polypeptide reads, in one-letter code: Alpha-conotoxin Cp20.3 (94 aa).

The N-terminal stretch at 1-24 (MPKLAVVLLVLLILPLSYFDAAGG) is a signal peptide. Residues 25-45 (QAVQGDRRGNGLARYLQRGDR) constitute a propeptide that is removed on maturation. The residue at position 46 (Glu-46) is a 4-carboxyglutamate; partial. Glu-49 carries the post-translational modification 4-carboxyglutamate. 4-hydroxyproline is present on Pro-55. 4 disulfide bridges follow: Cys-63–Cys-72, Cys-68–Cys-80, Cys-73–Cys-90, and Cys-78–Cys-92.

This sequence belongs to the conotoxin D superfamily. Hetero-, homo- or pseudo-homodimer (identical sequence, different post-translational modifications). As to expression, expressed by the venom duct.

The protein localises to the secreted. In terms of biological role, alpha-D-conopeptides act on postsynaptic membranes, they bind to the nicotinic acetylcholine receptors (nAChR) and thus inhibit them. Through its two C-terminal domains, this homodimeric protein would bind to two nAChR allosteric sites, located outside the nAChR C-loop of the principal binding face and at the adjacent binding interface in a clockwise direction. This toxin specifically blocks mammalian neuronal nAChR of the alpha-7/CHRNA7 (IC(50)=0.25 nM), alpha-3-beta-2/CHRNA3-CHRNB2 (IC(50)=2.8 nM), and alpha-4-beta-2/CHRNA4-CHRNB2 (IC(50)=28.6 nM) subtypes. Has no effect on alpha-3-beta-4/CHRNA3-CHRNB4, alpha-4-beta-4/CHRNA4-CHRNB4 and alpha-1-beta-1-epsilon-delta/CHRNA1-CHRNB1-CHRNE-CHRND subtypes of nAChRs. The sequence is that of Alpha-conotoxin Cp20.3 from Conus capitaneus (Captain cone).